The sequence spans 198 residues: Recombination protein RecR (198 aa).

Residues 57 to 72 form a C4-type zinc finger; that stretch reads CSVCGHITDRDPCYIC. Positions 80–175 constitute a Toprim domain; sequence SVVCVVQEPK…KVTRIAHGLP (96 aa).

Belongs to the RecR family.

Its function is as follows. May play a role in DNA repair. It seems to be involved in an RecBC-independent recombinational process of DNA repair. It may act with RecF and RecO. In Bacillus mycoides (strain KBAB4) (Bacillus weihenstephanensis), this protein is Recombination protein RecR.